Here is a 599-residue protein sequence, read N- to C-terminus: Nucleolar protein dnt1 (599 aa).

The residue at position 174 (Ser-174) is a Phosphoserine. 2 disordered regions span residues 210-262 (TQEE…PSRL) and 292-599 (DKSL…AALV). Over residues 218 to 241 (QSFNSSLTPSQPTTYNRANFFSIN) the composition is skewed to polar residues. Positions 242–251 (DASSDSSSDA) are enriched in low complexity. The segment covering 292–303 (DKSLRSSTREVS) has biased composition (basic and acidic residues). Ser-306 is subject to Phosphoserine. The span at 307 to 320 (PNEDSVNDDSSSDV) shows a compositional bias: acidic residues. The span at 321–333 (SDEKETEAKHEIR) shows a compositional bias: basic and acidic residues. The segment covering 344–354 (SHPSTAVPSEN) has biased composition (polar residues). The span at 364–380 (LSESSTTSISSSPSENS) shows a compositional bias: low complexity. Polar residues predominate over residues 390-401 (DSPNKSLVNDNV). Residues 402–413 (SAKHDKESENGK) show a composition bias toward basic and acidic residues. Over residues 421–431 (QTLVTTSTISA) the composition is skewed to polar residues. Positions 436–452 (PSDEIGSENDSDSDSDS) are enriched in acidic residues. Polar residues predominate over residues 456–480 (VPLSQLQKKSQQRNSVSHEIQNRGT). Positions 483–500 (SPKEPKAKPSTERPETHR) are enriched in basic and acidic residues. Residues 501 to 514 (TLSYSRLSELSKTF) show a composition bias toward polar residues. Thr-513 is modified (phosphothreonine). Basic and acidic residues-rich tracts occupy residues 533–542 (ESKEEGRSDE) and 558–574 (NSEK…EKRA).

In terms of processing, phosphorylated by clp1.

It localises to the cytoplasm. Its subcellular location is the nucleus. The protein resides in the nucleolus. It is found in the cytoskeleton. The protein localises to the spindle. Its function is as follows. Negatively regulates the septation initiation network (SIN) pathway, independently of the cdc14 phosphatase clp1. May also have a role in silencing rDNA transcription. Required for maintaining the exclusive nucleolus localization of nuc1. This chain is Nucleolar protein dnt1 (dnt1), found in Schizosaccharomyces pombe (strain 972 / ATCC 24843) (Fission yeast).